The primary structure comprises 179 residues: MARLKQVYKDQVVAKLTEEFSYKNVMEVPKITKITLNMGVGEAIADKKLLEHAVNDLEALSGQKVVVTKARKSVAGFKIRDGYPIGCKVTLRGERMWDFFDRLVDVAIPRIRDFRGLNPKSFDGRGNYSMGVKEQIIFPEIDYDKVDRVRGMDITITTTARTDEEGRALLAAFSFPFKK.

It belongs to the universal ribosomal protein uL5 family. In terms of assembly, part of the 50S ribosomal subunit; part of the 5S rRNA/L5/L18/L25 subcomplex. Contacts the 5S rRNA and the P site tRNA. Forms a bridge to the 30S subunit in the 70S ribosome.

In terms of biological role, this is one of the proteins that bind and probably mediate the attachment of the 5S RNA into the large ribosomal subunit, where it forms part of the central protuberance. In the 70S ribosome it contacts protein S13 of the 30S subunit (bridge B1b), connecting the 2 subunits; this bridge is implicated in subunit movement. Contacts the P site tRNA; the 5S rRNA and some of its associated proteins might help stabilize positioning of ribosome-bound tRNAs. The protein is Large ribosomal subunit protein uL5 of Marinomonas sp. (strain MWYL1).